The chain runs to 400 residues: CinA-like protein (400 aa).

The protein belongs to the CinA family.

This chain is CinA-like protein, found in Escherichia coli O9:H4 (strain HS).